We begin with the raw amino-acid sequence, 584 residues long: Arginine--tRNA ligase (584 aa).

A 'HIGH' region motif is present at residues P126–H136.

The protein belongs to the class-I aminoacyl-tRNA synthetase family. As to quaternary structure, monomer.

It localises to the cytoplasm. The catalysed reaction is tRNA(Arg) + L-arginine + ATP = L-arginyl-tRNA(Arg) + AMP + diphosphate. The sequence is that of Arginine--tRNA ligase from Synechococcus elongatus (strain ATCC 33912 / PCC 7942 / FACHB-805) (Anacystis nidulans R2).